Consider the following 201-residue polypeptide: 3-isopropylmalate dehydratase small subunit (201 aa).

The protein belongs to the LeuD family. LeuD type 1 subfamily. As to quaternary structure, heterodimer of LeuC and LeuD.

The enzyme catalyses (2R,3S)-3-isopropylmalate = (2S)-2-isopropylmalate. It participates in amino-acid biosynthesis; L-leucine biosynthesis; L-leucine from 3-methyl-2-oxobutanoate: step 2/4. In terms of biological role, catalyzes the isomerization between 2-isopropylmalate and 3-isopropylmalate, via the formation of 2-isopropylmaleate. In Glaesserella parasuis serovar 5 (strain SH0165) (Haemophilus parasuis), this protein is 3-isopropylmalate dehydratase small subunit.